The following is a 291-amino-acid chain: N-acetylmannosamine kinase (291 aa).

ATP-binding positions include 5 to 12 (AIDIGGTK) and 132 to 139 (GVGGGVVC). Positions 156, 166, 168, and 173 each coordinate Zn(2+).

This sequence belongs to the ROK (NagC/XylR) family. NanK subfamily. Homodimer.

It catalyses the reaction an N-acyl-D-mannosamine + ATP = an N-acyl-D-mannosamine 6-phosphate + ADP + H(+). It participates in amino-sugar metabolism; N-acetylneuraminate degradation; D-fructose 6-phosphate from N-acetylneuraminate: step 2/5. Its function is as follows. Catalyzes the phosphorylation of N-acetylmannosamine (ManNAc) to ManNAc-6-P. In Salmonella dublin (strain CT_02021853), this protein is N-acetylmannosamine kinase.